The following is a 289-amino-acid chain: Pyridoxal kinase PdxY (289 aa).

Substrate is bound by residues S9 and 44 to 45 (TQ). D112, A144, E149, and K182 together coordinate ATP. D225 is a binding site for substrate.

It belongs to the pyridoxine kinase family. PdxY subfamily. Homodimer. Requires Mg(2+) as cofactor.

The catalysed reaction is pyridoxal + ATP = pyridoxal 5'-phosphate + ADP + H(+). It participates in cofactor metabolism; pyridoxal 5'-phosphate salvage; pyridoxal 5'-phosphate from pyridoxal: step 1/1. In terms of biological role, pyridoxal kinase involved in the salvage pathway of pyridoxal 5'-phosphate (PLP). Catalyzes the phosphorylation of pyridoxal to PLP. This is Pyridoxal kinase PdxY from Aliivibrio fischeri (strain ATCC 700601 / ES114) (Vibrio fischeri).